The primary structure comprises 245 residues: tRNA pseudouridine synthase A (245 aa).

D52 serves as the catalytic Nucleophile. Y110 provides a ligand contact to substrate.

The protein belongs to the tRNA pseudouridine synthase TruA family. Homodimer.

The enzyme catalyses uridine(38/39/40) in tRNA = pseudouridine(38/39/40) in tRNA. Its function is as follows. Formation of pseudouridine at positions 38, 39 and 40 in the anticodon stem and loop of transfer RNAs. The chain is tRNA pseudouridine synthase A from Pseudothermotoga lettingae (strain ATCC BAA-301 / DSM 14385 / NBRC 107922 / TMO) (Thermotoga lettingae).